A 348-amino-acid polypeptide reads, in one-letter code: Selenide, water dikinase (348 aa).

Residue Cys17 is part of the active site. Residues Lys20 and 47–49 each bind ATP; that span reads THD. Asp50 lines the Mg(2+) pocket. Residues Asp67, Asp90, and 138-140 each bind ATP; that span reads GHT. Residue Asp90 coordinates Mg(2+). Asp226 is a Mg(2+) binding site.

Belongs to the selenophosphate synthase 1 family. Class I subfamily. Homodimer. Requires Mg(2+) as cofactor.

The enzyme catalyses hydrogenselenide + ATP + H2O = selenophosphate + AMP + phosphate + 2 H(+). Synthesizes selenophosphate from selenide and ATP. The chain is Selenide, water dikinase from Porphyromonas gingivalis (strain ATCC BAA-308 / W83).